Reading from the N-terminus, the 516-residue chain is RxLR effector protein PITG_15127 (516 aa).

The first 22 residues, 1 to 22 (MRLYSGAILCTIATLLISVSTA), serve as a signal peptide directing secretion. A RxLR-dEER motif is present at residues 48–63 (RFLRVSTQNTENGENR).

It belongs to the RxLR effector family.

The protein resides in the secreted. The protein localises to the host cell membrane. It is found in the host nucleus. It localises to the host cytoplasm. Its function is as follows. Effector that enhances P.infestans colonization of Nicotiana benthamiana leaves. The polypeptide is RxLR effector protein PITG_15127 (Phytophthora infestans (strain T30-4) (Potato late blight agent)).